We begin with the raw amino-acid sequence, 398 residues long: MGDSEIQYLLEKLKKLEEDYYKLRELYRRLEDEKKFIESERIRYEREVRRLRSEVERLRSPPLLVGVVSDILEDGRVVVKSSTGPKFVVNTSQYINEEELKPGARVALNQQTLAIVNVLPTSKDPMVYGFEVEEKPEVSYEDIGGLDVQIEEIREAVELPLLKPELFAEVGIEPPKGVLLYGPPGTGKTLLAKAVANQTRATFIRVVGSEFVQKYIGEGARLVREVFQLAKEKAPSIIFIDELDAIAARRTNSDTSGDREVQRTMMQLLAELDGFDPRGDVKVIGATNRIDILDPAILRPGRFDRIIEVPLPTFEGRIQIFKIHTRKMKLAEDVDFKELARITEGASGADIKAICTEAGMFAIREERAKVTMLDFTKAIEKVLKKTTPIPDLKGVMFV.

The stretch at 3–60 (DSEIQYLLEKLKKLEEDYYKLRELYRRLEDEKKFIESERIRYEREVRRLRSEVERLRS) forms a coiled coil. Residues 185 to 190 (GTGKTL) and His-324 each bind ATP. Positions 396–398 (MFV) are docks into pockets in the proteasome alpha-ring to cause gate opening.

This sequence belongs to the AAA ATPase family. As to quaternary structure, homohexamer. The hexameric complex has a two-ring architecture resembling a top hat that caps the 20S proteasome core at one or both ends. Upon ATP-binding, the C-terminus of PAN interacts with the alpha-rings of the proteasome core by binding to the intersubunit pockets.

It is found in the cytoplasm. ATPase which is responsible for recognizing, binding, unfolding and translocation of substrate proteins into the archaeal 20S proteasome core particle. Is essential for opening the gate of the 20S proteasome via an interaction with its C-terminus, thereby allowing substrate entry and access to the site of proteolysis. Thus, the C-termini of the proteasomal ATPase function like a 'key in a lock' to induce gate opening and therefore regulate proteolysis. Unfolding activity requires energy from ATP hydrolysis, whereas ATP binding alone promotes ATPase-20S proteasome association which triggers gate opening, and supports translocation of unfolded substrates. This is Proteasome-activating nucleotidase from Archaeoglobus fulgidus (strain ATCC 49558 / DSM 4304 / JCM 9628 / NBRC 100126 / VC-16).